Consider the following 69-residue polypeptide: Conotoxin Fr3.1 (69 aa).

Positions 1 to 20 are cleaved as a signal peptide; it reads MLKTGVLLLIFLVLFPLATL. Positions 21 to 51 are excised as a propeptide; that stretch reads QDADQPVERNVENKQDLNLDKRRGMKLLAQR. At Gln-52 the chain carries Pyrrolidone carboxylic acid. Glu-54 carries the 4-carboxyglutamate modification. Pro-58 carries the post-translational modification 4-hydroxyproline.

This sequence belongs to the conotoxin M superfamily. Expressed by the venom duct.

It is found in the secreted. Probable toxin. In Conus frigidus (Frigid cone), this protein is Conotoxin Fr3.1.